The sequence spans 81 residues: Mipartoxin-2 (81 aa).

Residues 1–21 (MKTLLLTLVVVTIVCLDLGNS) form the signal peptide. 4 disulfide bridges follow: Cys24–Cys42, Cys35–Cys61, Cys65–Cys73, and Cys74–Cys79.

It belongs to the three-finger toxin family. Short-chain subfamily. In terms of tissue distribution, expressed by the venom gland.

It is found in the secreted. In terms of biological role, snake venom neurotoxin that blocks neuromuscular transmission, presenting a postsynaptic action through the nicotinic acetylcholine receptor (nAChR). Has no cytotoxic activity. The sequence is that of Mipartoxin-2 from Micrurus mipartitus (Red-tailed coral snake).